The sequence spans 193 residues: Putative 3-methyladenine DNA glycosylase (193 aa).

It belongs to the DNA glycosylase MPG family.

The chain is Putative 3-methyladenine DNA glycosylase from Agrobacterium fabrum (strain C58 / ATCC 33970) (Agrobacterium tumefaciens (strain C58)).